The primary structure comprises 291 residues: m-AAA protease-interacting protein 1, mitochondrial (291 aa).

The transit peptide at methionine 1–tyrosine 96 directs the protein to the mitochondrion.

Interacts with AFG3L2. Interacts with SPG7. Interacts with SMDT1/EMRE (via the N-terminal transit peptide); interaction is direct and takes place before maturation of SMDT1/EMRE.

The protein localises to the mitochondrion matrix. Its function is as follows. Promotes sorting of SMDT1/EMRE in mitochondria by ensuring its maturation. Interacts with the transit peptide region of SMDT1/EMRE precursor protein in the mitochondrial matrix, leading to protect it against protein degradation by YME1L1, thereby ensuring SMDT1/EMRE maturation by the mitochondrial processing peptidase (PMPCA and PMPCB). In Rattus norvegicus (Rat), this protein is m-AAA protease-interacting protein 1, mitochondrial.